The sequence spans 245 residues: Small ribosomal subunit protein uS2 (245 aa).

Belongs to the universal ribosomal protein uS2 family.

This chain is Small ribosomal subunit protein uS2, found in Pseudomonas putida (strain W619).